A 300-amino-acid polypeptide reads, in one-letter code: D-alanine--D-alanine ligase (300 aa).

The ATP-grasp domain maps to 99 to 293 (KKILKYANIN…FAELLNSIVK (195 aa)). 126–181 (IEKIGYPVFVKPNSGGSSVATNLVKDGDGIKEAVELALKYDKEVMIENYTKGEEIT) is an ATP binding site. Positions 248, 260, and 262 each coordinate Mg(2+).

This sequence belongs to the D-alanine--D-alanine ligase family. The cofactor is Mg(2+). It depends on Mn(2+) as a cofactor.

It localises to the cytoplasm. The enzyme catalyses 2 D-alanine + ATP = D-alanyl-D-alanine + ADP + phosphate + H(+). The protein operates within cell wall biogenesis; peptidoglycan biosynthesis. In terms of biological role, cell wall formation. This chain is D-alanine--D-alanine ligase, found in Clostridium botulinum (strain 657 / Type Ba4).